The following is a 154-amino-acid chain: Melatonin receptor type 1A (154 aa).

Residues Tyr-1–Ser-19 are Cytoplasmic-facing. The chain crosses the membrane as a helical span at residues Leu-20 to Met-40. Over Gly-41–Tyr-62 the chain is Extracellular. Residues Thr-63–Leu-83 traverse the membrane as a helical segment. The Cytoplasmic portion of the chain corresponds to Arg-84–Met-115. The chain crosses the membrane as a helical span at residues Phe-116–Val-136. The Extracellular portion of the chain corresponds to Ala-137 to Glu-149.

The protein belongs to the G-protein coupled receptor 1 family.

Its subcellular location is the cell membrane. High affinity receptor for melatonin. Likely to mediate the reproductive and circadian actions of melatonin. The activity of this receptor is mediated by pertussis toxin sensitive G proteins that inhibit adenylate cyclase activity. The sequence is that of Melatonin receptor type 1A (MTNR1A) from Sus scrofa (Pig).